A 340-amino-acid polypeptide reads, in one-letter code: Probable complex I intermediate-associated protein 30, mitochondrial (340 aa).

Belongs to the CIA30 family.

Its subcellular location is the mitochondrion. Chaperone protein involved in the assembly of the mitochondrial NADH:ubiquinone oxidoreductase complex (complex I). Required for normal growth and reproduction. The protein is Probable complex I intermediate-associated protein 30, mitochondrial (nuaf-1) of Caenorhabditis elegans.